A 93-amino-acid chain; its full sequence is Sm-like protein LSM2 (93 aa).

Residues 2-76 (LFFSYFKDLV…VRYVQLPKDG (75 aa)) enclose the Sm domain.

Belongs to the snRNP Sm proteins family. In terms of assembly, component of the heptameric LSM1-LSM7 complex that forms a seven-membered ring structure with a donut shape. The LSM subunits are arranged in the order LSM1, LSM2, LSM3, LSM6, LSM5, LSM7 and LSM4. LSM2 subunit interacts only with its two neighboring subunits, LSM1A or LSM1B and LSM3A or LSM3B. Component of the heptameric LSM2-LSM8 complex that forms a seven-membered ring structure with a donut shape. The LSM subunits are arranged in the order LSM8, LSM2, LSM3, LSM6, LSM5, LSM7 and LSM4. LSM2 subunit interacts only with its two neighboring subunits, LSM8 and LSM3A or LSM3B. In terms of tissue distribution, expressed in roots, leaves, stems, flowers and siliques.

The protein localises to the cytoplasm. It is found in the nucleus. Component of LSM protein complexes, which are involved in RNA processing. Component of the cytoplasmic LSM1-LSM7 complex which is involved in mRNA degradation by promoting decapping and leading to accurate 5'-3' mRNA decay. The cytoplasmic LSM1-LSM7 complex regulates developmental gene expression by the decapping of specific development-related transcripts. Component of the nuclear LSM2-LSM8 complex which is involved splicing nuclear mRNAs. LSM2-LSM8 binds directly to the U6 small nuclear RNAs (snRNAs) and is essential for accurate splicing of selected development-related mRNAs through the stabilization of the spliceosomal U6 snRNA. Plays a critical role in the regulation of development-related gene expression. In Arabidopsis thaliana (Mouse-ear cress), this protein is Sm-like protein LSM2.